Here is a 420-residue protein sequence, read N- to C-terminus: UDP-N-acetylglucosamine 1-carboxyvinyltransferase 2 (420 aa).

A phosphoenolpyruvate-binding site is contributed by 22-23; sequence KN. Residue Arg92 coordinates UDP-N-acetyl-alpha-D-glucosamine. Residue Cys116 is the Proton donor of the active site. At Cys116 the chain carries 2-(S-cysteinyl)pyruvic acid O-phosphothioketal. UDP-N-acetyl-alpha-D-glucosamine is bound by residues 121–125, Asp307, and Ile329; that span reads RPIDL.

The protein belongs to the EPSP synthase family. MurA subfamily.

It localises to the cytoplasm. The catalysed reaction is phosphoenolpyruvate + UDP-N-acetyl-alpha-D-glucosamine = UDP-N-acetyl-3-O-(1-carboxyvinyl)-alpha-D-glucosamine + phosphate. Its pathway is cell wall biogenesis; peptidoglycan biosynthesis. Its function is as follows. Cell wall formation. Adds enolpyruvyl to UDP-N-acetylglucosamine. This is UDP-N-acetylglucosamine 1-carboxyvinyltransferase 2 from Streptococcus thermophilus (strain ATCC BAA-250 / LMG 18311).